Reading from the N-terminus, the 523-residue chain is Apoptosis inhibitor 5-B (523 aa).

Residues 1-360 (MPTVEELYRN…HQLGRKLPDF (360 aa)) form an ARM-like and Heat-like helical repeats region. Residues 446–523 (VQKTDSGQKR…RGNRSRGRIY (78 aa)) are disordered. Residues 454–475 (KRMSDETSSTSPPKKPVVGPKR) carry the Nuclear localization signal motif. Over residues 502–515 (GFQGGRGRGWGGRG) the composition is skewed to gly residues.

This sequence belongs to the API5 family. Monomer.

The protein localises to the nucleus. May be an antiapoptotic factor. This chain is Apoptosis inhibitor 5-B (api5-b), found in Xenopus laevis (African clawed frog).